The chain runs to 162 residues: D-aminoacyl-tRNA deacylase (162 aa).

Residues 145 to 146 (GP) carry the Gly-cisPro motif, important for rejection of L-amino acids motif.

It belongs to the DTD family. In terms of assembly, homodimer.

The protein localises to the cytoplasm. The enzyme catalyses glycyl-tRNA(Ala) + H2O = tRNA(Ala) + glycine + H(+). It carries out the reaction a D-aminoacyl-tRNA + H2O = a tRNA + a D-alpha-amino acid + H(+). Functionally, an aminoacyl-tRNA editing enzyme that deacylates mischarged D-aminoacyl-tRNAs. Also deacylates mischarged glycyl-tRNA(Ala), protecting cells against glycine mischarging by AlaRS. Acts via tRNA-based rather than protein-based catalysis; rejects L-amino acids rather than detecting D-amino acids in the active site. By recycling D-aminoacyl-tRNA to D-amino acids and free tRNA molecules, this enzyme counteracts the toxicity associated with the formation of D-aminoacyl-tRNA entities in vivo and helps enforce protein L-homochirality. The sequence is that of D-aminoacyl-tRNA deacylase from Bifidobacterium longum subsp. infantis (strain ATCC 15697 / DSM 20088 / JCM 1222 / NCTC 11817 / S12).